Reading from the N-terminus, the 353-residue chain is Photosystem II D2 protein (353 aa).

The residue at position 2 (T2) is an N-acetylthreonine. T2 is modified (phosphothreonine). The chain crosses the membrane as a helical span at residues 41–61; the sequence is CAYFAVGGWFTGTTFVTSWYT. Position 118 (H118) interacts with chlorophyll a. A helical transmembrane segment spans residues 125–141; it reads GFMLRQFELARSVQLRP. Residues Q130 and N143 each contribute to the pheophytin a site. A helical transmembrane segment spans residues 153 to 166; sequence VFVSVFLIYPLGQS. H198 is a chlorophyll a binding site. Residues 208–228 traverse the membrane as a helical segment; that stretch reads AALLCAIHGATVENTLFEDGD. The a plastoquinone site is built by H215 and F262. H215 lines the Fe cation pocket. H269 contributes to the Fe cation binding site. The chain crosses the membrane as a helical span at residues 279-295; sequence GLWMSALGVVGLALNLR.

It belongs to the reaction center PufL/M/PsbA/D family. PSII is composed of 1 copy each of membrane proteins PsbA, PsbB, PsbC, PsbD, PsbE, PsbF, PsbH, PsbI, PsbJ, PsbK, PsbL, PsbM, PsbT, PsbX, PsbY, PsbZ, Psb30/Ycf12, at least 3 peripheral proteins of the oxygen-evolving complex and a large number of cofactors. It forms dimeric complexes. The D1/D2 heterodimer binds P680, chlorophylls that are the primary electron donor of PSII, and subsequent electron acceptors. It shares a non-heme iron and each subunit binds pheophytin, quinone, additional chlorophylls, carotenoids and lipids. There is also a Cl(-1) ion associated with D1 and D2, which is required for oxygen evolution. The PSII complex binds additional chlorophylls, carotenoids and specific lipids. is required as a cofactor.

It is found in the plastid. The protein resides in the chloroplast thylakoid membrane. It carries out the reaction 2 a plastoquinone + 4 hnu + 2 H2O = 2 a plastoquinol + O2. In terms of biological role, photosystem II (PSII) is a light-driven water:plastoquinone oxidoreductase that uses light energy to abstract electrons from H(2)O, generating O(2) and a proton gradient subsequently used for ATP formation. It consists of a core antenna complex that captures photons, and an electron transfer chain that converts photonic excitation into a charge separation. The D1/D2 (PsbA/PsbD) reaction center heterodimer binds P680, the primary electron donor of PSII as well as several subsequent electron acceptors. D2 is needed for assembly of a stable PSII complex. The polypeptide is Photosystem II D2 protein (Cicer arietinum (Chickpea)).